Here is a 421-residue protein sequence, read N- to C-terminus: Serine--tRNA ligase (421 aa).

Position 230–232 (230–232) interacts with L-serine; sequence TAE. 261–263 is an ATP binding site; that stretch reads RRE. Glu-284 provides a ligand contact to L-serine. 348-351 is an ATP binding site; the sequence is EISS. Ser-383 is an L-serine binding site.

This sequence belongs to the class-II aminoacyl-tRNA synthetase family. Type-1 seryl-tRNA synthetase subfamily. In terms of assembly, homodimer. The tRNA molecule binds across the dimer.

The protein localises to the cytoplasm. The enzyme catalyses tRNA(Ser) + L-serine + ATP = L-seryl-tRNA(Ser) + AMP + diphosphate + H(+). It catalyses the reaction tRNA(Sec) + L-serine + ATP = L-seryl-tRNA(Sec) + AMP + diphosphate + H(+). Its pathway is aminoacyl-tRNA biosynthesis; selenocysteinyl-tRNA(Sec) biosynthesis; L-seryl-tRNA(Sec) from L-serine and tRNA(Sec): step 1/1. Catalyzes the attachment of serine to tRNA(Ser). Is also able to aminoacylate tRNA(Sec) with serine, to form the misacylated tRNA L-seryl-tRNA(Sec), which will be further converted into selenocysteinyl-tRNA(Sec). The polypeptide is Serine--tRNA ligase (Finegoldia magna (strain ATCC 29328 / DSM 20472 / WAL 2508) (Peptostreptococcus magnus)).